The primary structure comprises 87 residues: Cell division topological specificity factor (87 aa).

It belongs to the MinE family.

Its function is as follows. Prevents the cell division inhibition by proteins MinC and MinD at internal division sites while permitting inhibition at polar sites. This ensures cell division at the proper site by restricting the formation of a division septum at the midpoint of the long axis of the cell. This Delftia acidovorans (strain DSM 14801 / SPH-1) protein is Cell division topological specificity factor.